The chain runs to 272 residues: Aquaporin-11 (272 aa).

Topologically, residues Met-1–Thr-14 are cytoplasmic. Residues Cys-15 to Ala-35 traverse the membrane as a helical segment. Residues Arg-36–Ala-47 lie on the Lumenal side of the membrane. A helical transmembrane segment spans residues Phe-48–Leu-68. At Ser-69–His-75 the chain is on the cytoplasmic side. A helical membrane pass occupies residues Pro-76–Gly-96. Residues Thr-97–Ala-167 are Lumenal-facing. The NPC motif lies at Asn-100–Cys-102. A helical transmembrane segment spans residues Val-168 to Val-188. The Cytoplasmic segment spans residues Arg-189–His-195. Residues Leu-196–Phe-216 traverse the membrane as a helical segment. An NPA motif is present at residues Asn-217 to Ala-219. At Asn-217 to Gln-235 the chain is on the lumenal side. Residues Phe-236 to Ser-256 traverse the membrane as a helical segment. Residues Phe-257–Glu-272 are Cytoplasmic-facing.

It belongs to the MIP/aquaporin (TC 1.A.8) family. AQP11/AQP12 subfamily. In terms of assembly, homodimer; disulfide-linked. Homotetramer. Can also form homomultimer. Post-translationally, not glycosylated. As to expression, expressed in retina specifically at retinal Mueller glial cells.

It is found in the endoplasmic reticulum membrane. The protein resides in the cytoplasmic vesicle membrane. It localises to the cell membrane. It catalyses the reaction H2O(in) = H2O(out). It carries out the reaction glycerol(in) = glycerol(out). The catalysed reaction is H2O2(out) = H2O2(in). In terms of biological role, channel protein that facilitates the transport of water, glycerol and hydrogen peroxide across membrane of cell or organelles guaranteeing intracellular homeostasis in several organes like liver, kidney and brain. In situation of stress, participates in endoplasmic reticulum (ER) homeostasis by regulating redox homeostasis through the transport of hydrogen peroxide across the endoplasmic reticulum membrane thereby regulating the oxidative stress through the NADPH oxidase 2 pathway. Plays a role by maintaining an environment suitable for translation or protein foldings in the ER lumen namely by participating in the PKD1 glycosylation processing resulting in regulation of PKD1 membrane trafficking thereby preventing the accumulation of unfolding protein in ER. Plays a role in the proximal tubule function by regulating its endosomal acidification. May play a role in postnatal kidney development. The protein is Aquaporin-11 of Equus caballus (Horse).